The chain runs to 137 residues: Large ribosomal subunit protein uL16 (137 aa).

Belongs to the universal ribosomal protein uL16 family. Part of the 50S ribosomal subunit.

Functionally, binds 23S rRNA and is also seen to make contacts with the A and possibly P site tRNAs. The chain is Large ribosomal subunit protein uL16 from Streptococcus pyogenes serotype M1.